We begin with the raw amino-acid sequence, 199 residues long: Recombination protein RecR (199 aa).

The C4-type zinc finger occupies 58-73; that stretch reads CLVCGNVTGSDICPIC. In terms of domain architecture, Toprim spans 81–176; it reads GEICVVTDVA…AVTGLAQGVP (96 aa).

This sequence belongs to the RecR family.

Its function is as follows. May play a role in DNA repair. It seems to be involved in an RecBC-independent recombinational process of DNA repair. It may act with RecF and RecO. This is Recombination protein RecR from Paracoccus denitrificans (strain Pd 1222).